Reading from the N-terminus, the 225-residue chain is Probable polyketide biosynthesis zinc-dependent hydrolase PksB (225 aa).

7 residues coordinate Zn(2+): H62, H64, D66, H67, H123, D140, and H181.

The protein belongs to the metallo-beta-lactamase superfamily. Zn(2+) is required as a cofactor.

Its subcellular location is the cytoplasm. Its pathway is antibiotic biosynthesis; bacillaene biosynthesis. Its function is as follows. Probably involved in some intermediate steps for the synthesis of the antibiotic polyketide bacillaene which is involved in secondary metabolism. The chain is Probable polyketide biosynthesis zinc-dependent hydrolase PksB (pksB) from Bacillus subtilis (strain 168).